Consider the following 42-residue polypeptide: MRMIGLLYDFKDYASKMAENMARLAALLHYFSGDGGDISVTG.

This is Protein YkgS (ykgS) from Escherichia coli (strain K12).